The following is a 280-amino-acid chain: Pantothenate synthetase (280 aa).

31–38 serves as a coordination point for ATP; the sequence is MGNLHVGH. H38 functions as the Proton donor in the catalytic mechanism. Q62 serves as a coordination point for (R)-pantoate. A beta-alanine-binding site is contributed by Q62. 150–153 contributes to the ATP binding site; that stretch reads GKKD. Residue Q156 participates in (R)-pantoate binding. ATP contacts are provided by residues V179 and 187 to 190; that span reads MSSR.

This sequence belongs to the pantothenate synthetase family. Homodimer.

It localises to the cytoplasm. The catalysed reaction is (R)-pantoate + beta-alanine + ATP = (R)-pantothenate + AMP + diphosphate + H(+). Its pathway is cofactor biosynthesis; (R)-pantothenate biosynthesis; (R)-pantothenate from (R)-pantoate and beta-alanine: step 1/1. Its function is as follows. Catalyzes the condensation of pantoate with beta-alanine in an ATP-dependent reaction via a pantoyl-adenylate intermediate. This Xanthomonas oryzae pv. oryzae (strain MAFF 311018) protein is Pantothenate synthetase.